We begin with the raw amino-acid sequence, 318 residues long: MFLTNISCLIIPILLAVAFLTLVERKILGYMQLRKGPNIVGPYGLLQPIADAIKLFTKEPLRPLTSSKLLFTIAPTLALSLALTLWIPLPMPHPLANLNLGMLFILAMSSLAVYSILWSGWASNSKYALIGALRAVAQTISYEVTLAIILLHSNLFSGSYSLSSLITTQEHIWLIIPSWPLTMMWFISTLAETNRAPFDLTEGESELVSGFNVEYAAGPFALFFLAEYANIMMMNALTTTIFLGPTYNPTFPELYSTNFMLKTTMLTISFLWIRASYPRFRYDQLMHLLWKNFLPLTLALCMWHTSLLISLTSIPPQT.

9 consecutive transmembrane segments (helical) span residues Phe-2–Leu-22, Gly-36–Phe-56, Leu-69–Leu-89, Leu-100–Gly-120, Ile-130–His-152, His-171–Ala-191, Ala-217–Leu-237, Leu-254–Ile-273, and Leu-294–Ile-314.

This sequence belongs to the complex I subunit 1 family.

It is found in the mitochondrion inner membrane. The enzyme catalyses a ubiquinone + NADH + 5 H(+)(in) = a ubiquinol + NAD(+) + 4 H(+)(out). Its function is as follows. Core subunit of the mitochondrial membrane respiratory chain NADH dehydrogenase (Complex I) that is believed to belong to the minimal assembly required for catalysis. Complex I functions in the transfer of electrons from NADH to the respiratory chain. The immediate electron acceptor for the enzyme is believed to be ubiquinone. This chain is NADH-ubiquinone oxidoreductase chain 1 (MT-ND1), found in Cyclopes didactylus (Silky anteater).